The chain runs to 146 residues: Hemoglobin subunit beta (146 aa).

Position 1 is an N-acetylvaline (Val-1). The region spanning 2 to 146 (HLTPEEKALV…VANALAHKYH (145 aa)) is the Globin domain. Lys-59 is modified (N6-acetyllysine). Residue His-63 coordinates heme b. An N6-acetyllysine modification is found at Lys-82. Heme b is bound at residue His-92. Residue Cys-93 is modified to S-nitrosocysteine. Position 144 is an N6-acetyllysine (Lys-144).

Belongs to the globin family. Heterotetramer of two alpha chains and two beta chains. Red blood cells.

Its function is as follows. Involved in oxygen transport from the lung to the various peripheral tissues. This is Hemoglobin subunit beta (HBB) from Trichechus inunguis (Amazon manatee).